The chain runs to 400 residues: NADH-quinone oxidoreductase subunit D (400 aa).

Belongs to the complex I 49 kDa subunit family. NDH-1 is composed of 14 different subunits. Subunits NuoB, C, D, E, F, and G constitute the peripheral sector of the complex.

The protein resides in the cell inner membrane. The catalysed reaction is a quinone + NADH + 5 H(+)(in) = a quinol + NAD(+) + 4 H(+)(out). NDH-1 shuttles electrons from NADH, via FMN and iron-sulfur (Fe-S) centers, to quinones in the respiratory chain. The immediate electron acceptor for the enzyme in this species is believed to be a menaquinone. Couples the redox reaction to proton translocation (for every two electrons transferred, four hydrogen ions are translocated across the cytoplasmic membrane), and thus conserves the redox energy in a proton gradient. In Chlorobium phaeobacteroides (strain DSM 266 / SMG 266 / 2430), this protein is NADH-quinone oxidoreductase subunit D.